Reading from the N-terminus, the 307-residue chain is ATP-dependent (S)-NAD(P)H-hydrate dehydratase (307 aa).

Positions 1-291 (MDHFIKLLPK…DEIPKLVRDV (291 aa)) constitute a YjeF C-terminal domain. Residues Gly96 and 150 to 156 (NIVEFSR) contribute to the (6S)-NADPHX site. ATP contacts are provided by residues 194 to 198 (KGEVD) and 214 to 223 (SSLRRCGGQG). Asp224 serves as a coordination point for (6S)-NADPHX.

This sequence belongs to the NnrD/CARKD family. Requires Mg(2+) as cofactor.

The enzyme catalyses (6S)-NADHX + ATP = ADP + phosphate + NADH + H(+). It catalyses the reaction (6S)-NADPHX + ATP = ADP + phosphate + NADPH + H(+). In terms of biological role, catalyzes the dehydration of the S-form of NAD(P)HX at the expense of ATP, which is converted to ADP. Together with NAD(P)HX epimerase, which catalyzes the epimerization of the S- and R-forms, the enzyme allows the repair of both epimers of NAD(P)HX, a damaged form of NAD(P)H that is a result of enzymatic or heat-dependent hydration. The sequence is that of ATP-dependent (S)-NAD(P)H-hydrate dehydratase from Caenorhabditis elegans.